Reading from the N-terminus, the 240-residue chain is Ubiquitin domain-containing protein 2 (240 aa).

The tract at residues 1 to 48 (MGGCVGSHHDSSGSLNENSDGTGVALGRNQPLKREKPKWKSDYPMTDG) is disordered. A compositionally biased stretch (polar residues) spans 12–21 (SGSLNENSDG). Residues 32–41 (LKREKPKWKS) show a composition bias toward basic and acidic residues. Residues 152–227 (CQLRLRLSTG…VQVIVSQPPT (76 aa)) form the Ubiquitin-like domain.

It is found in the cytoplasm. In Danio rerio (Zebrafish), this protein is Ubiquitin domain-containing protein 2 (ubtd2).